A 249-amino-acid chain; its full sequence is Ubiquinone biosynthesis O-methyltransferase (249 aa).

The segment at 1-23 is disordered; it reads MTSPSQVLPASAGKPTGPNADPK. S-adenosyl-L-methionine contacts are provided by Arg-52, Gly-71, Asp-92, and Met-136.

It belongs to the methyltransferase superfamily. UbiG/COQ3 family.

It catalyses the reaction a 3-demethylubiquinol + S-adenosyl-L-methionine = a ubiquinol + S-adenosyl-L-homocysteine + H(+). The catalysed reaction is a 3-(all-trans-polyprenyl)benzene-1,2-diol + S-adenosyl-L-methionine = a 2-methoxy-6-(all-trans-polyprenyl)phenol + S-adenosyl-L-homocysteine + H(+). The protein operates within cofactor biosynthesis; ubiquinone biosynthesis. In terms of biological role, O-methyltransferase that catalyzes the 2 O-methylation steps in the ubiquinone biosynthetic pathway. This chain is Ubiquinone biosynthesis O-methyltransferase, found in Cupriavidus pinatubonensis (strain JMP 134 / LMG 1197) (Cupriavidus necator (strain JMP 134)).